The following is a 216-amino-acid chain: Probable GTP-binding protein EngB (216 aa).

The 178-residue stretch at 37–214 (GSVEIAFAGR…RAAMIRLLDE (178 aa)) folds into the EngB-type G domain. Residues 45–52 (GRSNVGKS), 72–76 (GRTQE), 92–95 (DMPG), 159–162 (TKAD), and 193–195 (TSS) contribute to the GTP site. Residues Ser52 and Thr74 each coordinate Mg(2+).

This sequence belongs to the TRAFAC class TrmE-Era-EngA-EngB-Septin-like GTPase superfamily. EngB GTPase family. Mg(2+) serves as cofactor.

Functionally, necessary for normal cell division and for the maintenance of normal septation. This Rhodopseudomonas palustris (strain TIE-1) protein is Probable GTP-binding protein EngB.